We begin with the raw amino-acid sequence, 56 residues long: uncharacterized protein (56 aa).

This is an uncharacterized protein from Saccharomyces cerevisiae (strain ATCC 204508 / S288c) (Baker's yeast).